Reading from the N-terminus, the 313-residue chain is Protein TIFY 4A (313 aa).

The segment at 118-149 is disordered; it reads SPRSAEFSGGSGHFVSEKDGHKTTISPRSPAE. Residues 150-185 form the Tify domain; it reads TSELVGQMTIFYSGKVNVYDGIPPEKARSIMHFAAN. Disordered stretches follow at residues 220–256 and 281–313; these read KANS…KAKK and QNLG…SEGI. The Jas signature appears at 232–254; that stretch reads QANRKVSLQRYREKRKDRKFSKA. Positions 234–241 match the Nuclear localization signal motif; it reads NRKVSLQR. Positions 243–256 are enriched in basic residues; that stretch reads REKRKDRKFSKAKK.

The protein belongs to the TIFY/JAZ family. In terms of assembly, interacts with AFPH2/NINJA.

It is found in the nucleus. Regulates the arrest of dispersed meristematic cells during lamina development. This chain is Protein TIFY 4A (TIFY4A), found in Arabidopsis thaliana (Mouse-ear cress).